The sequence spans 480 residues: Cytochrome b-c1 complex subunit 1, mitochondrial (480 aa).

The N-terminal 34 residues, 1–34, are a transit peptide targeting the mitochondrion; it reads MAASAVCRAACSGTQVLLRTRRSPALLRLPALRG. Lys111 and Lys138 each carry N6-acetyllysine. The residue at position 163 (Lys163) is an N6-acetyllysine; alternate. Lys163 carries the post-translational modification N6-succinyllysine; alternate. At Ser212 the chain carries Phosphoserine. Phosphothreonine is present on Thr214. At Lys248 the chain carries N6-acetyllysine.

Belongs to the peptidase M16 family. UQCRC1/QCR1 subfamily. As to quaternary structure, component of the ubiquinol-cytochrome c oxidoreductase (cytochrome b-c1 complex, complex III, CIII), a multisubunit enzyme composed of 11 subunits. The complex is composed of 3 respiratory subunits cytochrome b, cytochrome c1 and Rieske protein UQCRFS1, 2 core protein subunits UQCRC1/QCR1 and UQCRC2/QCR2, and 6 low-molecular weight protein subunits UQCRH/QCR6, UQCRB/QCR7, UQCRQ/QCR8, UQCR10/QCR9, UQCR11/QCR10 and subunit 9, the cleavage product of Rieske protein UQCRFS1. The complex exists as an obligatory dimer and forms supercomplexes (SCs) in the inner mitochondrial membrane with NADH-ubiquinone oxidoreductase (complex I, CI) and cytochrome c oxidase (complex IV, CIV), resulting in different assemblies (supercomplex SCI(1)III(2)IV(1) and megacomplex MCI(2)III(2)IV(2)). Interacts with UQCC6. Interacts with STMP1. Post-translationally, acetylation of Lys-138 is observed in liver mitochondria from fasted mice but not from fed mice. In terms of tissue distribution, expressed in neurons and astrocytes of the cerebral cortex and hippocampus (at protein level).

The protein localises to the mitochondrion inner membrane. Functionally, component of the ubiquinol-cytochrome c oxidoreductase, a multisubunit transmembrane complex that is part of the mitochondrial electron transport chain which drives oxidative phosphorylation. The respiratory chain contains 3 multisubunit complexes succinate dehydrogenase (complex II, CII), ubiquinol-cytochrome c oxidoreductase (cytochrome b-c1 complex, complex III, CIII) and cytochrome c oxidase (complex IV, CIV), that cooperate to transfer electrons derived from NADH and succinate to molecular oxygen, creating an electrochemical gradient over the inner membrane that drives transmembrane transport and the ATP synthase. The cytochrome b-c1 complex catalyzes electron transfer from ubiquinol to cytochrome c, linking this redox reaction to translocation of protons across the mitochondrial inner membrane, with protons being carried across the membrane as hydrogens on the quinol. In the process called Q cycle, 2 protons are consumed from the matrix, 4 protons are released into the intermembrane space and 2 electrons are passed to cytochrome c. The 2 core subunits UQCRC1/QCR1 and UQCRC2/QCR2 are homologous to the 2 mitochondrial-processing peptidase (MPP) subunits beta-MPP and alpha-MPP respectively, and they seem to have preserved their MPP processing properties. May be involved in the in situ processing of UQCRFS1 into the mature Rieske protein and its mitochondrial targeting sequence (MTS)/subunit 9 when incorporated into complex III. Seems to play an important role in the maintenance of proper mitochondrial function in nigral dopaminergic neurons. In Mus musculus (Mouse), this protein is Cytochrome b-c1 complex subunit 1, mitochondrial (Uqcrc1).